The chain runs to 701 residues: Aryl hydrocarbon receptor repressor (701 aa).

The bHLH domain occupies threonine 25 to lysine 78. Positions proline 106–proline 176 constitute a PAS domain. Residues threonine 409–serine 430 are compositionally biased toward polar residues. Residues threonine 409–cysteine 432 form a disordered region. The interval alanine 555–proline 701 is needed for transcriptional repression. Residues lysine 583 and lysine 660 each participate in a glycyl lysine isopeptide (Lys-Gly) (interchain with G-Cter in SUMO2) cross-link.

As to quaternary structure, interacts with ARNT, ANKRA2, HDAC4 and HDAC5. Interacts with ARNT; forms a heterodimer with ARNT.

It localises to the cytoplasm. The protein localises to the nucleus. Its function is as follows. Mediates dioxin toxicity and is involved in regulation of cell growth and differentiation. Represses the transcription activity of AHR by competing with this transcription factor for heterodimer formation with the ARNT and subsequently binding to the xenobiotic response element (XRE) sequence present in the promoter regulatory region of variety of genes. Represses CYP1A1 by binding the XRE sequence and recruiting ANKRA2, HDAC4 and/or HDAC5. Autoregulates its expression by associating with its own XRE site. In Mus musculus (Mouse), this protein is Aryl hydrocarbon receptor repressor (Ahrr).